Here is a 336-residue protein sequence, read N- to C-terminus: Holliday junction branch migration complex subunit RuvB (336 aa).

The segment at 4–184 (ADRLISATGV…FGIVQRLEFY (181 aa)) is large ATPase domain (RuvB-L). ATP contacts are provided by residues I23, R24, G65, K68, T69, T70, 131-133 (EDY), R174, Y184, and R221. T69 lines the Mg(2+) pocket. The tract at residues 185–255 (NVKDLTDIVS…IAARAMDMLD (71 aa)) is small ATPAse domain (RuvB-S). The interval 258–336 (NEGFDFMDRK…HFGLQRPDER (79 aa)) is head domain (RuvB-H). DNA contacts are provided by R313 and R318.

This sequence belongs to the RuvB family. As to quaternary structure, homohexamer. Forms an RuvA(8)-RuvB(12)-Holliday junction (HJ) complex. HJ DNA is sandwiched between 2 RuvA tetramers; dsDNA enters through RuvA and exits via RuvB. An RuvB hexamer assembles on each DNA strand where it exits the tetramer. Each RuvB hexamer is contacted by two RuvA subunits (via domain III) on 2 adjacent RuvB subunits; this complex drives branch migration. In the full resolvosome a probable DNA-RuvA(4)-RuvB(12)-RuvC(2) complex forms which resolves the HJ.

It localises to the cytoplasm. The enzyme catalyses ATP + H2O = ADP + phosphate + H(+). In terms of biological role, the RuvA-RuvB-RuvC complex processes Holliday junction (HJ) DNA during genetic recombination and DNA repair, while the RuvA-RuvB complex plays an important role in the rescue of blocked DNA replication forks via replication fork reversal (RFR). RuvA specifically binds to HJ cruciform DNA, conferring on it an open structure. The RuvB hexamer acts as an ATP-dependent pump, pulling dsDNA into and through the RuvAB complex. RuvB forms 2 homohexamers on either side of HJ DNA bound by 1 or 2 RuvA tetramers; 4 subunits per hexamer contact DNA at a time. Coordinated motions by a converter formed by DNA-disengaged RuvB subunits stimulates ATP hydrolysis and nucleotide exchange. Immobilization of the converter enables RuvB to convert the ATP-contained energy into a lever motion, pulling 2 nucleotides of DNA out of the RuvA tetramer per ATP hydrolyzed, thus driving DNA branch migration. The RuvB motors rotate together with the DNA substrate, which together with the progressing nucleotide cycle form the mechanistic basis for DNA recombination by continuous HJ branch migration. Branch migration allows RuvC to scan DNA until it finds its consensus sequence, where it cleaves and resolves cruciform DNA. In Aeromonas salmonicida (strain A449), this protein is Holliday junction branch migration complex subunit RuvB.